Reading from the N-terminus, the 62-residue chain is UPF0434 protein NGR_c31900 (62 aa).

The protein belongs to the UPF0434 family.

This Sinorhizobium fredii (strain NBRC 101917 / NGR234) protein is UPF0434 protein NGR_c31900.